The following is a 391-amino-acid chain: Trehalose-phosphate phosphatase (391 aa).

Catalysis depends on Asp-147, which acts as the Nucleophile. Positions 147, 149, and 330 each coordinate Mg(2+). 147–149 (DFD) lines the substrate pocket.

The protein belongs to the trehalose phosphatase family. Mg(2+) serves as cofactor.

It carries out the reaction alpha,alpha-trehalose 6-phosphate + H2O = alpha,alpha-trehalose + phosphate. Its pathway is glycan biosynthesis; trehalose biosynthesis. Its function is as follows. Removes the phosphate from trehalose 6-phosphate to produce free trehalose. The protein is Trehalose-phosphate phosphatase (otsB) of Mycolicibacterium paratuberculosis (strain ATCC BAA-968 / K-10) (Mycobacterium paratuberculosis).